Reading from the N-terminus, the 67-residue chain is Large ribosomal subunit protein bL35 (67 aa).

The interval 22-52 (VLAGPGKKRHNLSARSQKAKRQNRGSQVLTH) is disordered. The span at 27–44 (GKKRHNLSARSQKAKRQN) shows a compositional bias: basic residues.

It belongs to the bacterial ribosomal protein bL35 family.

This is Large ribosomal subunit protein bL35 from Granulibacter bethesdensis (strain ATCC BAA-1260 / CGDNIH1).